A 277-amino-acid polypeptide reads, in one-letter code: 4-hydroxy-tetrahydrodipicolinate reductase (277 aa).

9-14 provides a ligand contact to NAD(+); that stretch reads GATGRM. Position 37 (Lys-37) interacts with NADP(+). 75–77 lines the NAD(+) pocket; it reads GTS. Catalysis depends on His-132, which acts as the Proton donor/acceptor. Lys-136 (proton donor) is an active-site residue. 142–143 contacts (S)-2,3,4,5-tetrahydrodipicolinate; that stretch reads GT. The segment at 245 to 277 is disordered; that stretch reads SRERATQTAPTGAASGPVDDGGPSGQAATVTSA.

This sequence belongs to the DapB family.

It localises to the cytoplasm. It carries out the reaction (S)-2,3,4,5-tetrahydrodipicolinate + NAD(+) + H2O = (2S,4S)-4-hydroxy-2,3,4,5-tetrahydrodipicolinate + NADH + H(+). It catalyses the reaction (S)-2,3,4,5-tetrahydrodipicolinate + NADP(+) + H2O = (2S,4S)-4-hydroxy-2,3,4,5-tetrahydrodipicolinate + NADPH + H(+). Its pathway is amino-acid biosynthesis; L-lysine biosynthesis via DAP pathway; (S)-tetrahydrodipicolinate from L-aspartate: step 4/4. Functionally, catalyzes the conversion of 4-hydroxy-tetrahydrodipicolinate (HTPA) to tetrahydrodipicolinate. This chain is 4-hydroxy-tetrahydrodipicolinate reductase, found in Clavibacter sepedonicus (Clavibacter michiganensis subsp. sepedonicus).